The primary structure comprises 540 residues: Intestinal-type alkaline phosphatase 1 (540 aa).

An N-terminal signal peptide occupies residues 1 to 20; that stretch reads MQGDWVLLLLLGLRIHLSFG. Asp62 provides a ligand contact to Mg(2+). Zn(2+) contacts are provided by Asp62 and Ser112. Ser112 acts as the Phosphoserine intermediate in catalysis. A disulfide bridge links Cys141 with Cys203. An N-linked (GlcNAc...) asparagine glycan is attached at Asn142. Residue Ser175 coordinates Mg(2+). The Ca(2+) site is built by Glu236, Phe289, and Glu290. An N-linked (GlcNAc...) asparagine glycan is attached at Asn301. Asp305 contributes to the Ca(2+) binding site. Glu331 provides a ligand contact to Mg(2+). The Zn(2+) site is built by Asp336, His340, Asp377, and His378. Asn428 carries N-linked (GlcNAc...) asparagine glycosylation. Residue His452 coordinates Zn(2+). Cys487 and Cys494 are oxidised to a cystine. The GPI-anchor amidated asparagine moiety is linked to residue Asn511. The propeptide at 512–540 is removed in mature form; it reads SAITMNNVLLSLQLLVSMLLLVGTALVVS.

It belongs to the alkaline phosphatase family. Homodimer. Mg(2+) is required as a cofactor. Zn(2+) serves as cofactor. The cofactor is Ca(2+).

Its subcellular location is the cell membrane. The enzyme catalyses a phosphate monoester + H2O = an alcohol + phosphate. In terms of biological role, alkaline phosphatase that can hydrolyze various phosphate compounds. The protein is Intestinal-type alkaline phosphatase 1 (Alpi) of Rattus norvegicus (Rat).